The chain runs to 441 residues: UDP-N-acetylmuramoylalanine--D-glutamate ligase (441 aa).

ATP is bound at residue 113–119 (GSNAKST).

The protein belongs to the MurCDEF family.

Its subcellular location is the cytoplasm. It catalyses the reaction UDP-N-acetyl-alpha-D-muramoyl-L-alanine + D-glutamate + ATP = UDP-N-acetyl-alpha-D-muramoyl-L-alanyl-D-glutamate + ADP + phosphate + H(+). Its pathway is cell wall biogenesis; peptidoglycan biosynthesis. Functionally, cell wall formation. Catalyzes the addition of glutamate to the nucleotide precursor UDP-N-acetylmuramoyl-L-alanine (UMA). The chain is UDP-N-acetylmuramoylalanine--D-glutamate ligase from Alcanivorax borkumensis (strain ATCC 700651 / DSM 11573 / NCIMB 13689 / SK2).